The chain runs to 180 residues: 3-hydroxyanthranilate 3,4-dioxygenase (180 aa).

R46 is a binding site for O2. Residues H50, E56, and H94 each coordinate Fe cation. E56 is a binding site for substrate. Residues R98 and E109 each contribute to the substrate site. Positions 124, 127, 161, and 164 each coordinate Fe cation.

Belongs to the 3-HAO family. Homodimer. It depends on Fe(2+) as a cofactor.

It carries out the reaction 3-hydroxyanthranilate + O2 = (2Z,4Z)-2-amino-3-carboxymuconate 6-semialdehyde. The protein operates within cofactor biosynthesis; NAD(+) biosynthesis; quinolinate from L-kynurenine: step 3/3. Functionally, catalyzes the oxidative ring opening of 3-hydroxyanthranilate to 2-amino-3-carboxymuconate semialdehyde, which spontaneously cyclizes to quinolinate. The chain is 3-hydroxyanthranilate 3,4-dioxygenase from Ruegeria pomeroyi (strain ATCC 700808 / DSM 15171 / DSS-3) (Silicibacter pomeroyi).